Reading from the N-terminus, the 307-residue chain is Ribosomal RNA small subunit methyltransferase A (307 aa).

6 residues coordinate S-adenosyl-L-methionine: N35, V37, G62, E83, D113, and N136.

The protein belongs to the class I-like SAM-binding methyltransferase superfamily. rRNA adenine N(6)-methyltransferase family. RsmA subfamily.

It localises to the cytoplasm. The catalysed reaction is adenosine(1518)/adenosine(1519) in 16S rRNA + 4 S-adenosyl-L-methionine = N(6)-dimethyladenosine(1518)/N(6)-dimethyladenosine(1519) in 16S rRNA + 4 S-adenosyl-L-homocysteine + 4 H(+). Specifically dimethylates two adjacent adenosines (A1518 and A1519) in the loop of a conserved hairpin near the 3'-end of 16S rRNA in the 30S particle. May play a critical role in biogenesis of 30S subunits. This Bifidobacterium longum subsp. infantis (strain ATCC 15697 / DSM 20088 / JCM 1222 / NCTC 11817 / S12) protein is Ribosomal RNA small subunit methyltransferase A.